The chain runs to 154 residues: MGLSDGEWQLVLNAWGKVEADVAGHGQEVLIRLFTGHPETLEKFDKFKHLKTEAEMKASEDLKKHGNTVLTALGGILKKKGHHEAEVKHLAESHANKHKIPVKYLEFISDAIIHVLHAKHPSNFGADAQGAMSKALELFRNDMAAQYKVLGFQG.

The region spanning 2 to 148 (GLSDGEWQLV…FRNDMAAQYK (147 aa)) is the Globin domain. The residue at position 4 (serine 4) is a Phosphoserine. Histidine 65 contributes to the nitrite binding site. Histidine 65 is an O2 binding site. A Phosphothreonine modification is found at threonine 68. Histidine 94 contributes to the heme b binding site.

It belongs to the globin family. Monomeric.

It is found in the cytoplasm. The protein resides in the sarcoplasm. It carries out the reaction Fe(III)-heme b-[protein] + nitric oxide + H2O = Fe(II)-heme b-[protein] + nitrite + 2 H(+). It catalyses the reaction H2O2 + AH2 = A + 2 H2O. Functionally, monomeric heme protein which primary function is to store oxygen and facilitate its diffusion within muscle tissues. Reversibly binds oxygen through a pentacoordinated heme iron and enables its timely and efficient release as needed during periods of heightened demand. Depending on the oxidative conditions of tissues and cells, and in addition to its ability to bind oxygen, it also has a nitrite reductase activity whereby it regulates the production of bioactive nitric oxide. Under stress conditions, like hypoxia and anoxia, it also protects cells against reactive oxygen species thanks to its pseudoperoxidase activity. The polypeptide is Myoglobin (MB) (Cervus elaphus (Red deer)).